We begin with the raw amino-acid sequence, 336 residues long: tRNA-dihydrouridine(20/20a) synthase (336 aa).

FMN contacts are provided by residues 24–26 (PMM) and glutamine 77. Cysteine 107 serves as the catalytic Proton donor. Residues lysine 146, histidine 178, 218–220 (NGG), and 240–241 (GR) contribute to the FMN site.

It belongs to the Dus family. DusA subfamily. FMN is required as a cofactor.

It catalyses the reaction 5,6-dihydrouridine(20) in tRNA + NADP(+) = uridine(20) in tRNA + NADPH + H(+). The catalysed reaction is 5,6-dihydrouridine(20) in tRNA + NAD(+) = uridine(20) in tRNA + NADH + H(+). The enzyme catalyses 5,6-dihydrouridine(20a) in tRNA + NADP(+) = uridine(20a) in tRNA + NADPH + H(+). It carries out the reaction 5,6-dihydrouridine(20a) in tRNA + NAD(+) = uridine(20a) in tRNA + NADH + H(+). Functionally, catalyzes the synthesis of 5,6-dihydrouridine (D), a modified base found in the D-loop of most tRNAs, via the reduction of the C5-C6 double bond in target uridines. Specifically modifies U20 and U20a in tRNAs. The chain is tRNA-dihydrouridine(20/20a) synthase from Pseudomonas putida (strain ATCC 47054 / DSM 6125 / CFBP 8728 / NCIMB 11950 / KT2440).